The sequence spans 340 residues: tRNA N6-adenosine threonylcarbamoyltransferase (340 aa).

2 residues coordinate Fe cation: His-115 and His-119. Substrate-binding positions include 137-141 (IVSGG), Asp-170, Gly-183, Asp-187, and Asn-276. Asp-304 lines the Fe cation pocket.

Belongs to the KAE1 / TsaD family. It depends on Fe(2+) as a cofactor.

It is found in the cytoplasm. It catalyses the reaction L-threonylcarbamoyladenylate + adenosine(37) in tRNA = N(6)-L-threonylcarbamoyladenosine(37) in tRNA + AMP + H(+). Functionally, required for the formation of a threonylcarbamoyl group on adenosine at position 37 (t(6)A37) in tRNAs that read codons beginning with adenine. Is involved in the transfer of the threonylcarbamoyl moiety of threonylcarbamoyl-AMP (TC-AMP) to the N6 group of A37, together with TsaE and TsaB. TsaD likely plays a direct catalytic role in this reaction. This is tRNA N6-adenosine threonylcarbamoyltransferase from Staphylococcus epidermidis (strain ATCC 35984 / DSM 28319 / BCRC 17069 / CCUG 31568 / BM 3577 / RP62A).